The following is a 334-amino-acid chain: Ornithine carbamoyltransferase (334 aa).

Carbamoyl phosphate-binding positions include 56 to 59 (STRT), Q83, R107, and 134 to 137 (HPTQ). L-ornithine contacts are provided by residues N168, D232, and 236–237 (SM). Carbamoyl phosphate is bound by residues 274-275 (CL) and R320.

It belongs to the aspartate/ornithine carbamoyltransferase superfamily. OTCase family.

The protein resides in the cytoplasm. It carries out the reaction carbamoyl phosphate + L-ornithine = L-citrulline + phosphate + H(+). It participates in amino-acid biosynthesis; L-arginine biosynthesis; L-arginine from L-ornithine and carbamoyl phosphate: step 1/3. Reversibly catalyzes the transfer of the carbamoyl group from carbamoyl phosphate (CP) to the N(epsilon) atom of ornithine (ORN) to produce L-citrulline. This is Ornithine carbamoyltransferase from Escherichia coli (strain 55989 / EAEC).